We begin with the raw amino-acid sequence, 109 residues long: MNKIFFFKILLFAYLASFLRFFLNNNLLVGVIGSFVYGFVISRRVSKLKKEILLTGFCSCFTSFSGFVLFLYEISIQGYFLKLFFYLNIIIVLNLIIMYAGFLLGRKVT.

The next 3 membrane-spanning stretches (helical) occupy residues 21-41 (FFLN…GFVI), 52-72 (ILLT…LFLY), and 83-103 (LFFY…AGFL).

It belongs to the fluoride channel Fluc/FEX (TC 1.A.43) family.

The protein localises to the cell inner membrane. The catalysed reaction is fluoride(in) = fluoride(out). Functionally, fluoride-specific ion channel. Important for reducing fluoride concentration in the cell, thus reducing its toxicity. The chain is Fluoride-specific ion channel FluC from Prochlorococcus marinus (strain MIT 9515).